A 1268-amino-acid chain; its full sequence is Truncated polyprotein 1aTF (1268 aa).

The C4-type; atypical zinc finger occupies C8–C28. The region spanning E69 to H180 is the Peptidase C31 domain. The PCP1-alpha stretch occupies residues E69–D182. Residues C76 and H146 each act as for Nsp1-alpha papain-like cysteine proteinase activity in the active site. The tract at residues P269 to Y384 is PCP1-beta. The 117-residue stretch at P269–G385 folds into the Peptidase C32 domain. Active-site for Nsp1-beta papain-like cysteine proteinase activity residues include C276 and H345. The Peptidase C33 domain maps to T420–A527. Residues C429 and H498 each act as for Nsp2 cysteine proteinase activity in the active site. 2 disordered regions span residues A728–A758 and S1027–S1064. A compositionally biased stretch (basic and acidic residues) spans D737 to D749. Helical transmembrane passes span L1119 to V1139, F1153 to Y1173, V1194 to W1214, and V1233 to F1253.

It localises to the host nucleus. Its subcellular location is the host cytoplasm. The protein resides in the host endoplasmic reticulum membrane. The protein localises to the membrane. In terms of biological role, is essential for viral subgenomic mRNA synthesis. Functionally, inhibits IFN-beta production. Counteracts the action of NF-kappaB by decreasing the phosphorylation of IkappaB-alpha, such that the degradation of IkappaB-alpha is suppressed. This leads to the blockage of NF-kappaB nuclear translocation and thus interference of NF-kappaB activation. Also seems to inhibit IRF3-dependent pathways. Its function is as follows. Nsp1-beta transactivates the programmed ribosomal frameshifting event leading to the expression of the 1aTF polyprotein. The protein is Truncated polyprotein 1aTF of Porcine reproductive and respiratory syndrome virus (isolate Pig/United States/SD 01-08/2001) (PRRSV).